A 240-amino-acid polypeptide reads, in one-letter code: Hairy and enhancer of split-related protein HELT (240 aa).

Residues 10–65 (RTPVSHKVIEKRRRDRINRCLNELGKTVPMALAKQSSGKLEKAEILEMTVQYLRAL) form the bHLH domain. The residue at position 48 (lysine 48) is an N6-acetyllysine. One can recognise an Orange domain in the interval 86 to 121 (FHYGYHECMKNLVHYLTTVERMETKDTKYARILAFL).

Belongs to the HEY family. As to quaternary structure, self-associates. Interacts with HES5 and HEY2. In terms of tissue distribution, expressed in heart and testis.

It is found in the nucleus. In terms of biological role, transcriptional repressor which binds preferentially to the canonical E box sequence 5'-CACGCG-3'. Required for the development of GABAergic neurons. The polypeptide is Hairy and enhancer of split-related protein HELT (Helt) (Mus musculus (Mouse)).